The following is a 347-amino-acid chain: Anthranilate phosphoribosyltransferase (347 aa).

5-phospho-alpha-D-ribose 1-diphosphate is bound by residues Gly-86, 89–90 (GD), Thr-94, 96–99 (NIST), 114–122 (KHGNRSVSS), and Ser-126. Gly-86 is a binding site for anthranilate. Mg(2+) is bound at residue Ser-98. An anthranilate-binding site is contributed by Asn-117. Position 172 (Arg-172) interacts with anthranilate. The Mg(2+) site is built by Asp-230 and Glu-231.

Belongs to the anthranilate phosphoribosyltransferase family. Homodimer. It depends on Mg(2+) as a cofactor.

The catalysed reaction is N-(5-phospho-beta-D-ribosyl)anthranilate + diphosphate = 5-phospho-alpha-D-ribose 1-diphosphate + anthranilate. It functions in the pathway amino-acid biosynthesis; L-tryptophan biosynthesis; L-tryptophan from chorismate: step 2/5. Its function is as follows. Catalyzes the transfer of the phosphoribosyl group of 5-phosphorylribose-1-pyrophosphate (PRPP) to anthranilate to yield N-(5'-phosphoribosyl)-anthranilate (PRA). The chain is Anthranilate phosphoribosyltransferase from Shewanella frigidimarina (strain NCIMB 400).